The sequence spans 517 residues: Putative thymidine phosphorylase (517 aa).

This sequence belongs to the thymidine/pyrimidine-nucleoside phosphorylase family. Type 2 subfamily.

It carries out the reaction thymidine + phosphate = 2-deoxy-alpha-D-ribose 1-phosphate + thymine. The chain is Putative thymidine phosphorylase from Legionella pneumophila (strain Paris).